The chain runs to 258 residues: uncharacterized protein (258 aa).

NADP(+)-binding residues include Ile-17, Asp-53, Asn-80, Arg-113, Tyr-145, Lys-149, Ile-178, and Ser-180. Catalysis depends on Tyr-145, which acts as the Proton donor. Residue Lys-149 is the Lowers pKa of active site Tyr of the active site.

This sequence belongs to the short-chain dehydrogenases/reductases (SDR) family.

Its subcellular location is the cytoplasm. The protein localises to the nucleus. This is an uncharacterized protein from Schizosaccharomyces pombe (strain 972 / ATCC 24843) (Fission yeast).